The chain runs to 707 residues: MAP kinase-interacting serine/threonine-protein kinase mnk-1 (707 aa).

The span at 1–24 (MFFLDNTDSMTSSSRGITMPNTIS) shows a compositional bias: polar residues. Disordered regions lie at residues 1 to 29 (MFFL…HEDV) and 101 to 131 (RQRE…YVGR). Residues 203–493 (KLTDEHLGSG…ADQILSHRWL (291 aa)) enclose the Protein kinase domain. ATP-binding positions include 209–217 (LGSGAYGSV) and K232. D325 serves as the catalytic Proton acceptor. 2 disordered regions span residues 589–628 (RSGE…SADD) and 688–707 (FEDE…QVNV).

Belongs to the protein kinase superfamily. CAMK Ser/Thr protein kinase family. Requires Mg(2+) as cofactor. As to expression, expressed in pharynx, intestine, vulva and body wall muscles.

It is found in the nucleus. It localises to the cytoplasm. It carries out the reaction L-seryl-[protein] + ATP = O-phospho-L-seryl-[protein] + ADP + H(+). The catalysed reaction is L-threonyl-[protein] + ATP = O-phospho-L-threonyl-[protein] + ADP + H(+). Serine/threonine-protein kinase which is required in the germline to positively regulate lifespan. May play a role in body wall muscle contraction. May be involved in embryonic cytokinesis. The sequence is that of MAP kinase-interacting serine/threonine-protein kinase mnk-1 from Caenorhabditis elegans.